Reading from the N-terminus, the 370-residue chain is sn-glycerol-3-phosphate import ATP-binding protein UgpC (370 aa).

The ABC transporter domain maps to 4–235 (LRLDGIRKRY…PATRFVASFL (232 aa)). 37-44 (GPSGCGKS) serves as a coordination point for ATP.

This sequence belongs to the ABC transporter superfamily. sn-glycerol-3-phosphate importer (TC 3.A.1.1.3) family. As to quaternary structure, the complex is composed of two ATP-binding proteins (UgpC), two transmembrane proteins (UgpA and UgpE) and a solute-binding protein (UgpB).

Its subcellular location is the cell inner membrane. The enzyme catalyses sn-glycerol 3-phosphate(out) + ATP + H2O = sn-glycerol 3-phosphate(in) + ADP + phosphate + H(+). In terms of biological role, part of the ABC transporter complex UgpBAEC involved in sn-glycerol-3-phosphate (G3P) import. Responsible for energy coupling to the transport system. The sequence is that of sn-glycerol-3-phosphate import ATP-binding protein UgpC from Chromohalobacter salexigens (strain ATCC BAA-138 / DSM 3043 / CIP 106854 / NCIMB 13768 / 1H11).